A 559-amino-acid chain; its full sequence is MRPQELLLLLLMLKWSLAHTEDPAFPHLGDSSQPLPRPCPWRCSCPRDDTVDCAGLDLRIFPDNITRAARHLSLQNNQLRELPYNELSRLSGLRTLDLHSNLITSEGLPDEAFESLNQLENFYVAHNKLSVAPQFLPRSLRVADLAANEVVEIFPLTFGEKPALRSVYLHNNRLRNTGLPPNTFHGSEVITTLSLSSNQLSYLPPSLPASLERLHLQNNLISKVPRGALSLQTHLRELYLQHNQLTDSGLDATTFSKLSSLEYLDLSHNQLATVPEGLPGTLTILHLGRNCIRHVEAVRLHKARGLRYLLLQHNKLGASALPKGTLRPLRALHTLHLYGNKLERVPPALPRHLQALVMPHNHVAALGARDLVSARALAELNLAYNSLASAHVHPSAFRRLRALRSLDLAGNQLTRLPEGLPASLRSLRLQRNQLRTLEPEQLAGLNKLRELNLAHNRLRVGDIGPGTWHELQALKVLDLSHNELSFVPPDLPEALEELYLQANRISHVGPEAFLSTPHLRALFLRANRLHMTSIRAEALQGLTHLRVVDTAENPEQVLV.

Positions 1–20 (MRPQELLLLLLMLKWSLAHT) are cleaved as a signal peptide. N-linked (GlcNAc...) asparagine glycosylation occurs at Asn64. LRR repeat units lie at residues 66–89 (TRAA…ELSR), 90–115 (LSGL…AFES), 117–139 (NQLE…LPRS), 140–160 (LRVA…TFGE), 161–186 (KPAL…TFHG), 188–208 (EVIT…PSLP), 209–231 (ASLE…ALSL), 233–257 (THLR…TFSK), 258–281 (LSSL…LPGT), 283–302 (TILH…RLHK), 303–328 (ARGL…TLRP), 329–352 (LRAL…LPRH), 354–373 (QALV…DLVS), 374–399 (ARAL…AFRR), 400–423 (LRAL…LPAS), 425–444 (RSLR…QLAG), 445–470 (LNKL…TWHE), 471–494 (LQAL…LPEA), 496–515 (EELY…AFLS), and 517–541 (PHLR…ALQG).

This sequence belongs to the small leucine-rich proteoglycan (SLRP) family. SLRP class V subfamily. N-glycosylated. As to expression, detected in bone where it is expressed in osteoblasts and newly formed bone matrix (at protein level). Also expressed weakly in osteoclasts (at protein level). Expressed strongly in calvaria, lung and femur, and weakly in kidney.

It is found in the secreted. The protein resides in the extracellular space. The protein localises to the extracellular matrix. This Mus musculus (Mouse) protein is Podocan-like protein 1.